Reading from the N-terminus, the 1105-residue chain is Serine/threonine-protein kinase 4 homolog B (1105 aa).

Residues 23 to 274 (FDLIECLGRG…AKDLLKHSFF (252 aa)) enclose the Protein kinase domain. ATP contacts are provided by residues 29–37 (LGRGSFGSV) and Lys-52. Catalysis depends on Asp-142, which acts as the Proton acceptor. Disordered stretches follow at residues 348 to 396 (STQI…TKNN), 411 to 482 (SSSA…RQPA), and 495 to 541 (PSFG…SLPL). Low complexity-rich tracts occupy residues 358-396 (QAQQ…TKNN) and 411-437 (SSSA…TTTN). A compositionally biased stretch (polar residues) spans 438 to 458 (DYHTGNGRTSSSSPQFGLQHQ). Low complexity-rich tracts occupy residues 459-473 (NSSN…TVPS) and 513-541 (PIGS…SLPL). Positions 516–1105 (SPITKRPTPT…SEFDLDFYNN (590 aa)) are calpain-like cysteine protease-like. Domain III stretches follow at residues 641-668 (EVSA…EGSF), 791-830 (VHTQ…QGSI), 836-972 (SEQI…NVIQ), and 1076-1103 (VVIP…LDFY).

The protein in the N-terminal section; belongs to the protein kinase superfamily. STE Ser/Thr protein kinase family. STE20 subfamily. This sequence in the C-terminal section; belongs to the peptidase C2 family. Mn(2+) is required as a cofactor.

The catalysed reaction is L-seryl-[protein] + ATP = O-phospho-L-seryl-[protein] + ADP + H(+). The enzyme catalyses L-threonyl-[protein] + ATP = O-phospho-L-threonyl-[protein] + ADP + H(+). In terms of biological role, probable serine/threonine-protein kinase. This Dictyostelium discoideum (Social amoeba) protein is Serine/threonine-protein kinase 4 homolog B (krsB).